The chain runs to 404 residues: Exodeoxyribonuclease 7 large subunit (404 aa).

Belongs to the XseA family. Heterooligomer composed of large and small subunits.

It is found in the cytoplasm. It carries out the reaction Exonucleolytic cleavage in either 5'- to 3'- or 3'- to 5'-direction to yield nucleoside 5'-phosphates.. Its function is as follows. Bidirectionally degrades single-stranded DNA into large acid-insoluble oligonucleotides, which are then degraded further into small acid-soluble oligonucleotides. This is Exodeoxyribonuclease 7 large subunit from Ruminiclostridium cellulolyticum (strain ATCC 35319 / DSM 5812 / JCM 6584 / H10) (Clostridium cellulolyticum).